Consider the following 331-residue polypeptide: Ketol-acid reductoisomerase (NADP(+)) (331 aa).

The region spanning 2–182 (AQLFYDSDAD…GGTRAGILET (181 aa)) is the KARI N-terminal Rossmann domain. NADP(+) is bound by residues 25–28 (YGSQ), Ser-51, Ser-53, and 83–86 (DEFQ). The active site involves His-108. Gly-134 is a binding site for NADP(+). Residues 183-328 (NFKEETETDL…KGLRSMFSWL (146 aa)) form the KARI C-terminal knotted domain. Residues Asp-191, Glu-195, Glu-227, and Glu-231 each contribute to the Mg(2+) site. Ser-252 contacts substrate.

It belongs to the ketol-acid reductoisomerase family. The cofactor is Mg(2+).

The enzyme catalyses (2R)-2,3-dihydroxy-3-methylbutanoate + NADP(+) = (2S)-2-acetolactate + NADPH + H(+). It catalyses the reaction (2R,3R)-2,3-dihydroxy-3-methylpentanoate + NADP(+) = (S)-2-ethyl-2-hydroxy-3-oxobutanoate + NADPH + H(+). It functions in the pathway amino-acid biosynthesis; L-isoleucine biosynthesis; L-isoleucine from 2-oxobutanoate: step 2/4. It participates in amino-acid biosynthesis; L-valine biosynthesis; L-valine from pyruvate: step 2/4. Involved in the biosynthesis of branched-chain amino acids (BCAA). Catalyzes an alkyl-migration followed by a ketol-acid reduction of (S)-2-acetolactate (S2AL) to yield (R)-2,3-dihydroxy-isovalerate. In the isomerase reaction, S2AL is rearranged via a Mg-dependent methyl migration to produce 3-hydroxy-3-methyl-2-ketobutyrate (HMKB). In the reductase reaction, this 2-ketoacid undergoes a metal-dependent reduction by NADPH to yield (R)-2,3-dihydroxy-isovalerate. This chain is Ketol-acid reductoisomerase (NADP(+)), found in Synechococcus sp. (strain CC9902).